Here is a 150-residue protein sequence, read N- to C-terminus: Ribonuclease K6 (150 aa).

An N-terminal signal peptide occupies residues 1 to 23 (MVLCFPLLLLLLVLWGPVCPLHA). The active-site Proton acceptor is histidine 38. 4 disulfides stabilise this stretch: cysteine 46/cysteine 104, cysteine 60/cysteine 114, cysteine 78/cysteine 129, and cysteine 85/cysteine 92. N-linked (GlcNAc...) asparagine glycosylation is present at asparagine 55. Residues 61 to 65 (KHQNT) and lysine 86 contribute to the substrate site. Asparagine 100 carries an N-linked (GlcNAc...) asparagine glycan. Arginine 105 provides a ligand contact to substrate. Histidine 145 functions as the Proton donor in the catalytic mechanism.

The protein belongs to the pancreatic ribonuclease family. Interacts (via N-terminus) with bacterial lipopolysaccharide (LPS).

Its subcellular location is the secreted. The protein localises to the lysosome. It is found in the cytoplasmic granule. In terms of biological role, ribonuclease which shows a preference for the pyrimidines uridine and cytosine. Has potent antibacterial activity against a range of Gram-positive and Gram-negative bacteria, including P.aeruginosa, A.baumanii, M.luteus, S.aureus, E.faecalis, E.faecium, S.saprophyticus and E.coli. Causes loss of bacterial membrane integrity, and also promotes agglutination of Gram-negative bacteria. Probably contributes to urinary tract sterility. Bactericidal activity is independent of RNase activity. The chain is Ribonuclease K6 (RNASE6) from Pongo pygmaeus (Bornean orangutan).